The following is a 283-amino-acid chain: uncharacterized protein (283 aa).

The span at 208–232 (SMENKVNETQNSKEDEKKKNDGDGK) shows a compositional bias: basic and acidic residues. The interval 208 to 237 (SMENKVNETQNSKEDEKKKNDGDGKRSKKK) is disordered.

This is an uncharacterized protein from Saccharomyces cerevisiae (strain ATCC 204508 / S288c) (Baker's yeast).